The chain runs to 131 residues: Transcription antitermination protein NusB (131 aa).

The protein belongs to the NusB family.

Its function is as follows. Involved in transcription antitermination. Required for transcription of ribosomal RNA (rRNA) genes. Binds specifically to the boxA antiterminator sequence of the ribosomal RNA (rrn) operons. This Caldicellulosiruptor saccharolyticus (strain ATCC 43494 / DSM 8903 / Tp8T 6331) protein is Transcription antitermination protein NusB.